We begin with the raw amino-acid sequence, 173 residues long: Crossover junction endodeoxyribonuclease RuvC (173 aa).

Residues Asp8, Glu67, and Asp139 contribute to the active site. Mg(2+) contacts are provided by Asp8, Glu67, and Asp139.

This sequence belongs to the RuvC family. As to quaternary structure, homodimer which binds Holliday junction (HJ) DNA. The HJ becomes 2-fold symmetrical on binding to RuvC with unstacked arms; it has a different conformation from HJ DNA in complex with RuvA. In the full resolvosome a probable DNA-RuvA(4)-RuvB(12)-RuvC(2) complex forms which resolves the HJ. Requires Mg(2+) as cofactor.

It is found in the cytoplasm. The catalysed reaction is Endonucleolytic cleavage at a junction such as a reciprocal single-stranded crossover between two homologous DNA duplexes (Holliday junction).. In terms of biological role, the RuvA-RuvB-RuvC complex processes Holliday junction (HJ) DNA during genetic recombination and DNA repair. Endonuclease that resolves HJ intermediates. Cleaves cruciform DNA by making single-stranded nicks across the HJ at symmetrical positions within the homologous arms, yielding a 5'-phosphate and a 3'-hydroxyl group; requires a central core of homology in the junction. The consensus cleavage sequence is 5'-(A/T)TT(C/G)-3'. Cleavage occurs on the 3'-side of the TT dinucleotide at the point of strand exchange. HJ branch migration catalyzed by RuvA-RuvB allows RuvC to scan DNA until it finds its consensus sequence, where it cleaves and resolves the cruciform DNA. The sequence is that of Crossover junction endodeoxyribonuclease RuvC from Vibrio campbellii (strain ATCC BAA-1116).